A 1256-amino-acid polypeptide reads, in one-letter code: Putative protein DDB_G0292252 (1256 aa).

4 disordered regions span residues 1 to 53, 145 to 243, 898 to 951, and 1069 to 1136; these read MSDD…NNNN, LLNG…SISR, EQQQ…PVET, and SHPT…ATIS. Low complexity predominate over residues 147–214; that stretch reads NGNNSNNNSN…NGNNINTSNG (68 aa). The segment covering 222–243 has biased composition (polar residues); it reads QTESTEQDFTSTSQNSTPSISR. 2 stretches are compositionally biased toward low complexity: residues 898-916 and 925-942; these read EQQQQQQQQQSNLNNSNNE and TTAATTTTTTTTTTTTTT. Over residues 1069–1079 the composition is skewed to polar residues; it reads SHPTIQSTSSP. The segment covering 1080 to 1136 has biased composition (low complexity); sequence STSSSNNNNSTTTATNNNGNNGNNNNGNGNNNNNNNNNNNNNNNNNNNNNNGPATIS.

This is Putative protein DDB_G0292252 from Dictyostelium discoideum (Social amoeba).